Consider the following 537-residue polypeptide: Probable sterol O-acyltransferase 1 (537 aa).

Helical transmembrane passes span 98 to 118 (FRGF…QLYA), 140 to 160 (FFVL…SYGL), 174 to 194 (LGYT…VYWV), and 199 to 219 (FPIV…MKQF). A glycan (N-linked (GlcNAc...) asparagine) is linked at asparagine 250. 2 consecutive transmembrane segments (helical) span residues 344-364 (FGLL…SAVA) and 384-404 (IMFP…DCIL). Residues 418 to 424 (FYGAWWN) carry the FYXDWWN motif motif. The next 2 helical transmembrane spans lie at 462–482 (AVLL…LLAT) and 517–537 (VFFW…YIVF). Histidine 474 is an active-site residue.

Belongs to the membrane-bound acyltransferase family. Sterol o-acyltransferase subfamily.

Its subcellular location is the endoplasmic reticulum membrane. Functionally, sterol O-acyltransferase that catalyzes the formation of stery esters. This Schizosaccharomyces pombe (strain 972 / ATCC 24843) (Fission yeast) protein is Probable sterol O-acyltransferase 1 (are1).